We begin with the raw amino-acid sequence, 221 residues long: GTP-binding nuclear protein Ran/TC4 (221 aa).

In terms of domain architecture, Small GTPase Ran-type spans aspartate 10–aspartate 174. Position 21–28 (aspartate 21–threonine 28) interacts with GTP. Positions lysine 40–valine 48 are switch-I. GTP contacts are provided by residues glycine 71, asparagine 125 to aspartate 128, and serine 153 to lysine 155. The tract at residues glycine 71–glutamine 87 is switch-II.

This sequence belongs to the small GTPase superfamily. Ran family. Found in a nuclear export complex with RanGTP, exportin and pre-miRNA.

The protein resides in the nucleus. In terms of biological role, GTP-binding protein involved in nucleocytoplasmic transport. Required for the import of protein into the nucleus and also for RNA export. Involved in chromatin condensation and control of cell cycle. In Vicia faba (Broad bean), this protein is GTP-binding nuclear protein Ran/TC4.